Reading from the N-terminus, the 1262-residue chain is Synaptopodin-2 (1262 aa).

The interval 1–174 is interaction with VPS18; the sequence is MGTGDFICIS…PGSQEGHLVE (174 aa). The region spanning 6 to 88 is the PDZ domain; that stretch reads FICISMTGGA…SLHLLIKRPT (83 aa). Polar residues-rich tracts occupy residues 89 to 105 and 246 to 260; these read SGTSEALDSETENTNHQ and TSLTSGTTVQTSSGR. 2 disordered regions span residues 89–114 and 239–276; these read SGTSEALDSETENTNHQHLPHGGPME and PAPEKADTSLTSGTTVQTSSGRELTVIQGRDPGGTGLP. S304, S323, and S324 each carry phosphoserine. Residues 323–363 form a disordered region; that stretch reads SSEGTEQGEDQRSGKDQGRPHKHRARHARLRRSESLSEKQV. T327 bears the Phosphothreonine mark. Positions 331–341 are enriched in basic and acidic residues; it reads EDQRSGKDQGR. Over residues 342 to 352 the composition is skewed to basic residues; it reads PHKHRARHARL. Basic and acidic residues predominate over residues 353-363; the sequence is RRSESLSEKQV. The short motif at 392-400 is the Nuclear localization signal element; the sequence is KKRRRRARK. 3 interaction with ACTN2 regions span residues 477-658, 659-922, and 899-1153; these read MEML…FYDS, SEQI…PPVA, and QSPT…NIEE. Disordered stretches follow at residues 503–576 and 592–703; these read AQNE…GPQR and NQTA…SPNP. Phosphoserine is present on residues S518, S543, S544, S546, and S549. 2 F-actin binding regions span residues 530 to 658 and 659 to 801; these read TSYQ…FYDS and SEQI…VTAV. Residues 540–552 are compositionally biased toward low complexity; it reads RMQSSVSESSFQM. Residues 554–560 are interaction with YWHAB; the sequence is RSLGSVP. Position 558 is a phosphoserine; by PKA (S558). 2 stretches are compositionally biased toward polar residues: residues 558–569 and 592–606; these read SVPQQNGFSGVS and NQTAAPFSPTQSVTS. At S599 the chain carries Phosphoserine. Positions 602 to 809 are interaction with YWHAB; that stretch reads QSVTSPIPDF…AVSSIKIAQP (208 aa). T605 carries the phosphothreonine; by PKA and CaMK2 modification. Position 606 is a phosphoserine (S606). Pro residues-rich tracts occupy residues 609-625 and 639-650; these read PDFPAPPPYSAVSPPPE and AQPPPWPQPAPW. An interaction with BAG3 region spans residues 610–621; it reads DFPAPPPYSAVS. The PPPY motif signature appears at 614 to 617; sequence PPPY. At Y617 the chain carries Phosphotyrosine. S621 carries the phosphoserine modification. The tract at residues 659–914 is F-actin bundling activity; sequence SEQIASRDER…LPASWKYSSN (256 aa). Phosphoserine occurs at positions 700 and 724. Disordered stretches follow at residues 741-799 and 833-868; these read MQSS…PQVT and VVSHNYTPKPSAPTPLVNAAPAGAGGPSNELPGMSG. The tract at residues 745–898 is actin binding; that stretch reads AKQKTPPPVA…DTVQAHTVRA (154 aa). A Phosphothreonine modification is found at T749. Positions 756-782 are enriched in low complexity; it reads KPAVKTSSSSQPVAPVSPVWSPGVAPA. Residues S772 and S776 each carry the phosphoserine modification. Positions 786–799 are enriched in polar residues; the sequence is AFSTTNPPNPPQVT. The interaction with FLNC stretch occupies residues 808 to 1153; it reads QPTCPPARPA…EAFRPRNIEE (346 aa). Residues S900, S904, and S908 each carry the phosphoserine modification. The segment at 933–957 is disordered; sequence LAAIKSQPPGAQASKTSKKKGKKPL. The segment at 999–1018 is interaction with ZYX; the sequence is PAMKQALPPRQADIGSPTNA. Phosphoserine occurs at positions 1014, 1055, and 1090.

Belongs to the synaptopodin family. May self-associate in muscle cells under oxidative stress. Binds F-actin. Interacts with ACTN2; ACTN2 is proposed to anchor SYOP2 at Z lines in mature myocytes. Interacts with AKAP6, PPP3CA and CAMK2A. Interacts (phosphorylated form) with YWHAB; YWHAB competes with ACTN2 for interaction with SYNPO2. Interacts with KPNA2; mediating nuclear import of SYNOP2; dependent on interaction with YWHAB. Interacts with IPO13; may be implicated in SYNOP2 nuclear import. Interacts with ZYX, FLNC, ILK. Interacts with BAG3 (via WW 1 domain). May associate with the CASA complex consisting of HSPA8, HSPB8 and BAG3. Interacts with VPS18. Phosphorylated by PKA, and by CaMK2 at multiple sites. Dephosphorylated by calcineurin at Ser-558 and Thr-605; abrogating interaction with YWHAB and impairing nuclear import.

It is found in the nucleus. It localises to the cytoplasm. Its subcellular location is the cytoskeleton. The protein localises to the myofibril. The protein resides in the sarcomere. It is found in the z line. It localises to the cell junction. Its subcellular location is the focal adhesion. Has an actin-binding and actin-bundling activity. Can induce the formation of F-actin networks. At the sarcomeric Z lines is proposed to act as adapter protein that links nascent myofibers to the sarcolemma via ZYX and may play a role in early assembly and stabilization of the Z lines. Involved in autophagosome formation. May play a role in chaperone-assisted selective autophagy (CASA) involved in Z lines maintenance in striated muscle under mechanical tension; may link the client-processing CASA chaperone machinery to a membrane-tethering and fusion complex providing autophagosome membranes. Involved in regulation of cell migration. May be a tumor suppressor. The sequence is that of Synaptopodin-2 (Synpo2) from Rattus norvegicus (Rat).